Consider the following 504-residue polypeptide: Putative F-box/FBD/LRR-repeat protein At3g59240 (504 aa).

In terms of domain architecture, F-box spans 7-60; that stretch reads KDIISDLPEALICHLLSFVPTKEAALTSLLSEKWRYLFAFAPILDFDDSVWMQS. LRR repeat units follow at residues 69-95, 145-171, 173-198, 286-312, 329-354, 369-396, and 403-428; these read HRKF…SLNC, RIRT…DLSS, WFRD…TMSD, TNLF…TFCC, DKDV…VFKG, CLCK…KFGE, and DEEK…ILHY. Positions 382 to 427 constitute an FBD domain; sequence SSSPVKVLKILKFGEVASYFGDEEKQLELVKYFLETMPNLEQMILH.

The chain is Putative F-box/FBD/LRR-repeat protein At3g59240 from Arabidopsis thaliana (Mouse-ear cress).